The sequence spans 221 residues: Protein lethal(2)k10201 (221 aa).

2 C2H2-type zinc fingers span residues 74 to 97 (YSCVECRKMLPTAHLLDLHITEQH) and 113 to 138 (FSCFLEECTIKFHTARQRKDHCIITH). The interval 146–168 (FDHSKNRGKQKHQGKSKPNSMEV) is disordered. Positions 151 to 160 (NRGKQKHQGK) are enriched in basic residues.

In terms of biological role, vital for development. The polypeptide is Protein lethal(2)k10201 (l(2)k10201) (Drosophila melanogaster (Fruit fly)).